We begin with the raw amino-acid sequence, 568 residues long: Cytochrome P450 monooxygenase 41 (568 aa).

Residues 21–41 (LTSLVPLILSVMVCLIATVTI) traverse the membrane as a helical segment. N-linked (GlcNAc...) asparagine glycosylation is found at Asn-321 and Asn-377. Residue Cys-514 participates in heme binding.

Belongs to the cytochrome P450 family. It depends on heme as a cofactor.

The protein resides in the membrane. The protein operates within secondary metabolite biosynthesis. In terms of biological role, cytochrome P450 monooxygenase that is able to use 3,5-dimethoxy-trans-stilbene and 3,5,4'-trimethoxy-trans-stilbene as substrates for oxidation. This chain is Cytochrome P450 monooxygenase 41, found in Postia placenta (strain ATCC 44394 / Madison 698-R) (Brown rot fungus).